Here is a 279-residue protein sequence, read N- to C-terminus: tRNA pseudouridine synthase B (279 aa).

Aspartate 38 (nucleophile) is an active-site residue.

Belongs to the pseudouridine synthase TruB family. Type 1 subfamily.

It catalyses the reaction uridine(55) in tRNA = pseudouridine(55) in tRNA. Its function is as follows. Responsible for synthesis of pseudouridine from uracil-55 in the psi GC loop of transfer RNAs. In Acholeplasma laidlawii (strain PG-8A), this protein is tRNA pseudouridine synthase B.